The primary structure comprises 130 residues: Small ribosomal subunit protein uS8 (130 aa).

It belongs to the universal ribosomal protein uS8 family. As to quaternary structure, part of the 30S ribosomal subunit. Contacts proteins S5 and S12.

In terms of biological role, one of the primary rRNA binding proteins, it binds directly to 16S rRNA central domain where it helps coordinate assembly of the platform of the 30S subunit. This chain is Small ribosomal subunit protein uS8, found in Pseudoalteromonas atlantica (strain T6c / ATCC BAA-1087).